Reading from the N-terminus, the 129-residue chain is Large ribosomal subunit protein bL17 (129 aa).

This sequence belongs to the bacterial ribosomal protein bL17 family. Part of the 50S ribosomal subunit. Contacts protein L32.

This is Large ribosomal subunit protein bL17 from Pasteurella multocida (strain Pm70).